Reading from the N-terminus, the 404-residue chain is Putative nitronate monooxygenase (404 aa).

An FMN-binding site is contributed by 41–43 (PMA). Histidine 224 acts as the Proton acceptor in catalysis. A substrate-binding site is contributed by histidine 224. Residues 270 to 272 (AGG) and 293 to 294 (GT) contribute to the FMN site.

It belongs to the nitronate monooxygenase family. NMO class I subfamily. Requires FMN as cofactor.

Its subcellular location is the cytoplasm. The catalysed reaction is ethylnitronate + O2 = chemical entity + acetaldehyde + nitrite + H(+). In terms of biological role, catalyzes the oxidation of alkyl nitronates to produce the corresponding carbonyl compounds and nitrites. The sequence is that of Putative nitronate monooxygenase from Saccharomyces cerevisiae (strain ATCC 204508 / S288c) (Baker's yeast).